We begin with the raw amino-acid sequence, 673 residues long: Potassium-transporting ATPase ATP-binding subunit (673 aa).

4 helical membrane-spanning segments follow: residues 34–54, 65–85, 216–236, and 253–273; these read IMFV…YPDL, VFSI…SEAL, IALF…ILTM, and IALA…AIGI. The active-site 4-aspartylphosphate intermediate is the D304. Residues D341, E345, 370-377, and K388 contribute to the ATP site; that span reads FTAETRMS. Positions 511 and 515 each coordinate Mg(2+). A run of 3 helical transmembrane segments spans residues 581-601, 609-629, and 649-669; these read FAIL…LNIM, AVLS…PIAM, and VYGL…DLII.

The protein belongs to the cation transport ATPase (P-type) (TC 3.A.3) family. Type IA subfamily. As to quaternary structure, the system is composed of three essential subunits: KdpA, KdpB and KdpC.

It localises to the cell membrane. It carries out the reaction K(+)(out) + ATP + H2O = K(+)(in) + ADP + phosphate + H(+). Part of the high-affinity ATP-driven potassium transport (or Kdp) system, which catalyzes the hydrolysis of ATP coupled with the electrogenic transport of potassium into the cytoplasm. This subunit is responsible for energy coupling to the transport system and for the release of the potassium ions to the cytoplasm. This is Potassium-transporting ATPase ATP-binding subunit from Staphylococcus epidermidis (strain ATCC 35984 / DSM 28319 / BCRC 17069 / CCUG 31568 / BM 3577 / RP62A).